Reading from the N-terminus, the 281-residue chain is Cytochrome c oxidase subunit 3 (281 aa).

Residues 1–15 are Mitochondrial matrix-facing; sequence MTHQTHAYHMVNPSP. A helical membrane pass occupies residues 16–34; the sequence is WPLTGALSALLLTSGLIMW. Residues 35-40 are Mitochondrial intermembrane-facing; sequence FHYNSS. Residues 41–66 form a helical membrane-spanning segment; that stretch reads TLMFMGLTTMLLTMYQWWRDIIREGT. The Mitochondrial matrix segment spans residues 67–72; it reads FQGHHT. The chain crosses the membrane as a helical span at residues 73–105; that stretch reads PVVQKGLRYGMILFILSEVFFFIGFFWAFYHSS. Residues 106 to 128 lie on the Mitochondrial intermembrane side of the membrane; that stretch reads LAPTPELGGCWPPTGIHPLNPLE. A helical membrane pass occupies residues 129 to 152; the sequence is VPLLNTSILLASGVSITWAHHSLM. At 153-155 the chain is on the mitochondrial matrix side; it reads EGN. A helical membrane pass occupies residues 156-183; it reads RKQMIQALLITISLGLYFTILQAMEYYE. At 184–190 the chain is on the mitochondrial intermembrane side; it reads ASFTISD. The chain crosses the membrane as a helical span at residues 191-223; it reads GVYGSTFFVATGFHGLHVIIGSTFLIVCLLRQL. Residues 224–232 lie on the Mitochondrial matrix side of the membrane; sequence FYHFTSTHH. A helical transmembrane segment spans residues 233–256; the sequence is FGFEAAAWYWHFVDVVWLFLYVSI. Topologically, residues 257–281 are mitochondrial intermembrane; the sequence is YWWGSYFSSMISTTDFQSLSSGSNQ.

The protein belongs to the cytochrome c oxidase subunit 3 family. Component of the cytochrome c oxidase (complex IV, CIV), a multisubunit enzyme composed of 14 subunits. The complex is composed of a catalytic core of 3 subunits MT-CO1, MT-CO2 and MT-CO3, encoded in the mitochondrial DNA, and 11 supernumerary subunits COX4I, COX5A, COX5B, COX6A, COX6B, COX6C, COX7A, COX7B, COX7C, COX8 and NDUFA4, which are encoded in the nuclear genome. The complex exists as a monomer or a dimer and forms supercomplexes (SCs) in the inner mitochondrial membrane with NADH-ubiquinone oxidoreductase (complex I, CI) and ubiquinol-cytochrome c oxidoreductase (cytochrome b-c1 complex, complex III, CIII), resulting in different assemblies (supercomplex SCI(1)III(2)IV(1) and megacomplex MCI(2)III(2)IV(2)).

The protein resides in the mitochondrion inner membrane. The catalysed reaction is 4 Fe(II)-[cytochrome c] + O2 + 8 H(+)(in) = 4 Fe(III)-[cytochrome c] + 2 H2O + 4 H(+)(out). In terms of biological role, component of the cytochrome c oxidase, the last enzyme in the mitochondrial electron transport chain which drives oxidative phosphorylation. The respiratory chain contains 3 multisubunit complexes succinate dehydrogenase (complex II, CII), ubiquinol-cytochrome c oxidoreductase (cytochrome b-c1 complex, complex III, CIII) and cytochrome c oxidase (complex IV, CIV), that cooperate to transfer electrons derived from NADH and succinate to molecular oxygen, creating an electrochemical gradient over the inner membrane that drives transmembrane transport and the ATP synthase. Cytochrome c oxidase is the component of the respiratory chain that catalyzes the reduction of oxygen to water. Electrons originating from reduced cytochrome c in the intermembrane space (IMS) are transferred via the dinuclear copper A center (CU(A)) of subunit 2 and heme A of subunit 1 to the active site in subunit 1, a binuclear center (BNC) formed by heme A3 and copper B (CU(B)). The BNC reduces molecular oxygen to 2 water molecules using 4 electrons from cytochrome c in the IMS and 4 protons from the mitochondrial matrix. The chain is Cytochrome c oxidase subunit 3 (MT-CO3) from Didelphis virginiana (North American opossum).